A 332-amino-acid polypeptide reads, in one-letter code: Glyceraldehyde-3-phosphate dehydrogenase 2 (332 aa).

NAD(+) is bound by residues Arg11, Ile12, and Asp33. Glycyl lysine isopeptide (Lys-Gly) (interchain with G-Cter in ubiquitin) cross-links involve residues Lys46 and Lys63. Thr120 contacts NAD(+). Residues 149-151, Thr180, 209-210, and Arg232 each bind D-glyceraldehyde 3-phosphate; these read SCT and TG. The active-site Nucleophile is Cys150. Ser302 is modified (phosphoserine). 2 residues coordinate NAD(+): Asn314 and Tyr318.

Belongs to the glyceraldehyde-3-phosphate dehydrogenase family. As to quaternary structure, homotetramer.

It is found in the cytoplasm. The catalysed reaction is D-glyceraldehyde 3-phosphate + phosphate + NAD(+) = (2R)-3-phospho-glyceroyl phosphate + NADH + H(+). It carries out the reaction NADH + H2O = (6R)-NADHX. The enzyme catalyses NADH + H2O = (6S)-NADHX. It catalyses the reaction NADPH + H2O = (6R)-NADPHX. The catalysed reaction is NADPH + H2O = (6S)-NADPHX. It functions in the pathway carbohydrate degradation; glycolysis; pyruvate from D-glyceraldehyde 3-phosphate: step 1/5. In terms of biological role, glyceraldehyde-3-phosphate dehydrogenase (GAPDH) involved in glycolysis and gluconeogenesis. Catalyzes the reaction of glyceraldehyde-3-phosphate to 1,3 bis-phosphoglycerate. The contribution of the TDH1, TDH2, and TDH3 to the total glyceraldehyde-3-phosphate dehydrogenase activity is 10-15, 25-30, and 50-60%, respectively. As a side activity, catalyzes the hydration of the nicotinamide ring of NADH or NADPH at the C6 position to give the corresponding hydrates, NADHX and NADPHX, which exist as R and S epimers, that cannot act as electron donors or acceptors and inhibit several dehydrogenases, making them toxic. This Saccharomyces cerevisiae (strain ATCC 204508 / S288c) (Baker's yeast) protein is Glyceraldehyde-3-phosphate dehydrogenase 2.